The chain runs to 271 residues: MSKRLLLFDFDETYFKHNTNEEDLSHLREMEKLLEKLTNNNEVITVVLTGSTFQSVMDKMDQVNMTFKPLHIFSDLSSKMFTWNNGEYVESETYKKKVLSEPFLFEDIEDILHHISAQYNVEFIPQRAFEGNETHYNFYFHSTGNHNNDRRILEVLVRYANDQNYTARFSRSNPLAGDPENAYDIDFTPSNAGKLYATQFLMKKYNIPVKSILGFGDSGNDEAYLSYLEHAYLMSNSRDEALKQKFRLTKYPYYQGITLHVKEFVEGKYDY.

Belongs to the HAD-like hydrolase superfamily.

This is an uncharacterized protein from Staphylococcus aureus (strain MRSA252).